Consider the following 127-residue polypeptide: MIIGVGTDIVQIPRIEKIIKLYPEIFPKRILNTEELKKFALLKKESHVTFLAKRFAAKEAISKAFGVGIGRGINFKDITLLNDELGKPIVKIDSLYTQKLPPFNIHLSLSDDYPICVAFVVVEKIIL.

Mg(2+)-binding residues include D8 and E59.

Belongs to the P-Pant transferase superfamily. AcpS family. Mg(2+) serves as cofactor.

The protein resides in the cytoplasm. The enzyme catalyses apo-[ACP] + CoA = holo-[ACP] + adenosine 3',5'-bisphosphate + H(+). Functionally, transfers the 4'-phosphopantetheine moiety from coenzyme A to a Ser of acyl-carrier-protein. This Rickettsia bellii (strain OSU 85-389) protein is Holo-[acyl-carrier-protein] synthase.